The sequence spans 706 residues: Protein kinase C theta type (706 aa).

One can recognise a C2 domain in the interval 1-107 (MSPFLRIGLS…KNNGKTEIWL (107 aa)). At tyrosine 90 the chain carries Phosphotyrosine; by LCK. The segment at 159–209 (CHEFTATFFPQPTFCSVCHEFVWGLNKQGYQCRQCNAAIHKKCIDKVIAKC) adopts a Phorbol-ester/DAG-type 1 zinc-finger fold. Residue threonine 219 is modified to Phosphothreonine; by autocatalysis. Residues 231–281 (PHRFKVYNYKSPTFCEHCGTLLWGLARQGLKCDACGMNVHHRCQTKVANLC) form a Phorbol-ester/DAG-type 2 zinc finger. Residue serine 348 is modified to Phosphoserine. The region spanning 380-634 (FILHKMLGKG…RGDIRQHPLF (255 aa)) is the Protein kinase domain. Residues 386–394 (LGKGSFGKV) and lysine 409 contribute to the ATP site. Aspartate 504 functions as the Proton acceptor in the catalytic mechanism. The residue at position 538 (threonine 538) is a Phosphothreonine; by PDPK1. In terms of domain architecture, AGC-kinase C-terminal spans 635–706 (REINWEELER…MNPGMERLIS (72 aa)). 3 positions are modified to phosphoserine: serine 676, serine 685, and serine 695.

Belongs to the protein kinase superfamily. AGC Ser/Thr protein kinase family. PKC subfamily. In terms of assembly, part of a lipid raft complex composed at least of BCL10, CARD11, MALT1 and IKBKB. Interacts with GLRX3 (via N-terminus). Interacts with ECT2. Interacts with CCDC88A/GIV; the interaction leads to phosphorylation of CCDC88A and inhibition of its guanine nucleotide exchange factor activity. Interacts with PRKCH upstream open reading frame 2; the interaction leads to inhibition of kinase activity. Interacts with CD28. It depends on Mg(2+) as a cofactor. In terms of processing, autophosphorylation at Thr-219 is required for targeting to the TCR and cellular function of PRKCQ upon antigen receptor ligation. Following TCR stimulation, phosphorylated at Tyr-90 and Ser-685. Expressed in skeletal muscle, T-cells, megakaryoblastic cells and platelets.

It localises to the cytoplasm. It is found in the cell membrane. It carries out the reaction L-seryl-[protein] + ATP = O-phospho-L-seryl-[protein] + ADP + H(+). It catalyses the reaction L-threonyl-[protein] + ATP = O-phospho-L-threonyl-[protein] + ADP + H(+). With respect to regulation, novel PKCs (PRKCD, PRKCE, PRKCH and PRKCQ) are calcium-insensitive, but activated by diacylglycerol (DAG) and phosphatidylserine. Three specific sites; Thr-538 (activation loop of the kinase domain), Ser-676 (turn motif) and Ser-695 (hydrophobic region), need to be phosphorylated for its full activation. Inhibited by PRKCH upstream open reading frame 2. Calcium-independent, phospholipid- and diacylglycerol (DAG)-dependent serine/threonine-protein kinase that mediates non-redundant functions in T-cell receptor (TCR) signaling, including T-cells activation, proliferation, differentiation and survival, by mediating activation of multiple transcription factors such as NF-kappa-B, JUN, NFATC1 and NFATC2. In TCR-CD3/CD28-co-stimulated T-cells, is required for the activation of NF-kappa-B and JUN, which in turn are essential for IL2 production, and participates in the calcium-dependent NFATC1 and NFATC2 transactivation. Mediates the activation of the canonical NF-kappa-B pathway (NFKB1) by direct phosphorylation of CARD11 on several serine residues, inducing CARD11 association with lipid rafts and recruitment of the BCL10-MALT1 complex, which then activates IKK complex, resulting in nuclear translocation and activation of NFKB1. May also play an indirect role in activation of the non-canonical NF-kappa-B (NFKB2) pathway. In the signaling pathway leading to JUN activation, acts by phosphorylating the mediator STK39/SPAK and may not act through MAP kinases signaling. Plays a critical role in TCR/CD28-induced NFATC1 and NFATC2 transactivation by participating in the regulation of reduced inositol 1,4,5-trisphosphate generation and intracellular calcium mobilization. After costimulation of T-cells through CD28 can phosphorylate CBLB and is required for the ubiquitination and subsequent degradation of CBLB, which is a prerequisite for the activation of TCR. During T-cells differentiation, plays an important role in the development of T-helper 2 (Th2) cells following immune and inflammatory responses, and, in the development of inflammatory autoimmune diseases, is necessary for the activation of IL17-producing Th17 cells. May play a minor role in Th1 response. Upon TCR stimulation, mediates T-cell protective survival signal by phosphorylating BAD, thus protecting T-cells from BAD-induced apoptosis, and by up-regulating BCL-X(L)/BCL2L1 levels through NF-kappa-B and JUN pathways. In platelets, regulates signal transduction downstream of the ITGA2B, CD36/GP4, F2R/PAR1 and F2RL3/PAR4 receptors, playing a positive role in 'outside-in' signaling and granule secretion signal transduction. May relay signals from the activated ITGA2B receptor by regulating the uncoupling of WASP and WIPF1, thereby permitting the regulation of actin filament nucleation and branching activity of the Arp2/3 complex. May mediate inhibitory effects of free fatty acids on insulin signaling by phosphorylating IRS1, which in turn blocks IRS1 tyrosine phosphorylation and downstream activation of the PI3K/AKT pathway. Phosphorylates MSN (moesin) in the presence of phosphatidylglycerol or phosphatidylinositol. Phosphorylates PDPK1 at 'Ser-504' and 'Ser-532' and negatively regulates its ability to phosphorylate PKB/AKT1. Phosphorylates CCDC88A/GIV and inhibits its guanine nucleotide exchange factor activity. Phosphorylates and activates LRRK1, which phosphorylates RAB proteins involved in intracellular trafficking. The chain is Protein kinase C theta type (PRKCQ) from Homo sapiens (Human).